The primary structure comprises 426 residues: Tyrosine--tRNA ligase (426 aa).

Residue Tyr35 coordinates L-tyrosine. Residues 40 to 49 (PTAPSLHIGH) carry the 'HIGH' region motif. Positions 174 and 178 each coordinate L-tyrosine. The short motif at 234–238 (KFGKT) is the 'KMSKS' region element. Lys237 is a binding site for ATP. Residues 358-418 (PRVVDALVAT…WAVIRRGRRA (61 aa)) enclose the S4 RNA-binding domain.

Belongs to the class-I aminoacyl-tRNA synthetase family. TyrS type 1 subfamily. Homodimer.

Its subcellular location is the cytoplasm. It catalyses the reaction tRNA(Tyr) + L-tyrosine + ATP = L-tyrosyl-tRNA(Tyr) + AMP + diphosphate + H(+). Catalyzes the attachment of tyrosine to tRNA(Tyr) in a two-step reaction: tyrosine is first activated by ATP to form Tyr-AMP and then transferred to the acceptor end of tRNA(Tyr). The sequence is that of Tyrosine--tRNA ligase from Acidothermus cellulolyticus (strain ATCC 43068 / DSM 8971 / 11B).